We begin with the raw amino-acid sequence, 140 residues long: Cysteine desulfuration protein SufE (140 aa).

The active-site Cysteine persulfide intermediate is the C51.

Belongs to the SufE family. Homodimer. Interacts with SufS.

The protein resides in the cytoplasm. It functions in the pathway cofactor biosynthesis; iron-sulfur cluster biosynthesis. Participates in cysteine desulfuration mediated by SufS. Cysteine desulfuration mobilizes sulfur from L-cysteine to yield L-alanine and constitutes an essential step in sulfur metabolism for biosynthesis of a variety of sulfur-containing biomolecules. Functions as a sulfur acceptor for SufS, by mediating the direct transfer of the sulfur atom from the S-sulfanylcysteine of SufS, an intermediate product of cysteine desulfuration process. This is Cysteine desulfuration protein SufE from Yersinia pestis bv. Antiqua (strain Antiqua).